Reading from the N-terminus, the 662-residue chain is Acetyl-coenzyme A synthetase (662 aa).

Residues 197 to 200 (RKGK) and Thr-317 each bind CoA. Residues 393–395 (GEP), 417–422 (DTWWQT), Asp-510, and Arg-525 contribute to the ATP site. Ser-533 lines the CoA pocket. Arg-536 is an ATP binding site. Residues His-549 and Val-552 each coordinate Mg(2+). N6-acetyllysine is present on Lys-623.

It belongs to the ATP-dependent AMP-binding enzyme family. Requires Mg(2+) as cofactor. Post-translationally, acetylated. Deacetylation by the SIR2-homolog deacetylase activates the enzyme.

The catalysed reaction is acetate + ATP + CoA = acetyl-CoA + AMP + diphosphate. Functionally, catalyzes the conversion of acetate into acetyl-CoA (AcCoA), an essential intermediate at the junction of anabolic and catabolic pathways. AcsA undergoes a two-step reaction. In the first half reaction, AcsA combines acetate with ATP to form acetyl-adenylate (AcAMP) intermediate. In the second half reaction, it can then transfer the acetyl group from AcAMP to the sulfhydryl group of CoA, forming the product AcCoA. The chain is Acetyl-coenzyme A synthetase from Helicobacter pylori (strain G27).